Consider the following 598-residue polypeptide: Eukaryotic translation initiation factor 3 subunit D (598 aa).

Residues 104–178 are disordered; sequence VKTRGFGRGG…YDKPQRNRDS (75 aa). The span at 109–132 shows a compositional bias: gly residues; the sequence is FGRGGGTIFRGRGQRGGAQRGRGG. Basic and acidic residues predominate over residues 165–177; it reads GWKDYDKPQRNRD. The tract at residues 304–318 is RNA gate; that stretch reads SIDLVTVNENAADAP. The disordered stretch occupies residues 574–598; it reads NTFEEEDDTGAKAEKDEESEEKDEE. The segment covering 589-598 has biased composition (acidic residues); that stretch reads DEESEEKDEE.

This sequence belongs to the eIF-3 subunit D family. Component of the eukaryotic translation initiation factor 3 (eIF-3) complex.

The protein resides in the cytoplasm. Its function is as follows. mRNA cap-binding component of the eukaryotic translation initiation factor 3 (eIF-3) complex, which is involved in protein synthesis of a specialized repertoire of mRNAs and, together with other initiation factors, stimulates binding of mRNA and methionyl-tRNAi to the 40S ribosome. The eIF-3 complex specifically targets and initiates translation of a subset of mRNAs involved in cell proliferation. In the eIF-3 complex, eif3d specifically recognizes and binds the 7-methylguanosine cap of a subset of mRNAs. The polypeptide is Eukaryotic translation initiation factor 3 subunit D (Coccidioides immitis (strain RS) (Valley fever fungus)).